The primary structure comprises 89 residues: Small ribosomal subunit protein uS15 (89 aa).

This sequence belongs to the universal ribosomal protein uS15 family. Part of the 30S ribosomal subunit. Forms a bridge to the 50S subunit in the 70S ribosome, contacting the 23S rRNA.

One of the primary rRNA binding proteins, it binds directly to 16S rRNA where it helps nucleate assembly of the platform of the 30S subunit by binding and bridging several RNA helices of the 16S rRNA. In terms of biological role, forms an intersubunit bridge (bridge B4) with the 23S rRNA of the 50S subunit in the ribosome. The protein is Small ribosomal subunit protein uS15 of Methylocella silvestris (strain DSM 15510 / CIP 108128 / LMG 27833 / NCIMB 13906 / BL2).